We begin with the raw amino-acid sequence, 285 residues long: Shikimate dehydrogenase (NADP(+)) (285 aa).

Shikimate-binding positions include 19–21 (SLS) and Thr-66. Residue Lys-70 is the Proton acceptor of the active site. Asn-91 and Asp-107 together coordinate shikimate. NADP(+) contacts are provided by residues 129–133 (GSGGA) and Leu-228. Tyr-230 is a binding site for shikimate. Position 251 (Gly-251) interacts with NADP(+).

It belongs to the shikimate dehydrogenase family. In terms of assembly, homodimer.

The catalysed reaction is shikimate + NADP(+) = 3-dehydroshikimate + NADPH + H(+). It participates in metabolic intermediate biosynthesis; chorismate biosynthesis; chorismate from D-erythrose 4-phosphate and phosphoenolpyruvate: step 4/7. Its function is as follows. Involved in the biosynthesis of the chorismate, which leads to the biosynthesis of aromatic amino acids. Catalyzes the reversible NADPH linked reduction of 3-dehydroshikimate (DHSA) to yield shikimate (SA). This is Shikimate dehydrogenase (NADP(+)) from Prochlorococcus marinus subsp. pastoris (strain CCMP1986 / NIES-2087 / MED4).